The primary structure comprises 195 residues: Inhibitor of glycogen debranching 1 (195 aa).

A compositionally biased stretch (polar residues) spans 1 to 18 (MTDPHLNTPQVSTSPTFE). The interval 1 to 101 (MTDPHLNTPQ…ERRSSGPMDF (101 aa)) is disordered. Residue Ser64 is modified to Phosphoserine. Residue Thr65 is modified to Phosphothreonine. The span at 75-95 (EQARERESSIGEHAPGAERRS) shows a compositional bias: basic and acidic residues. Phosphoserine is present on residues Ser95 and Ser96. Thr132 carries the post-translational modification Phosphothreonine. The tract at residues 146-175 (NSYLDNNSNGNSARVPHGSPPQLGTRRKSS) is disordered. Over residues 148 to 157 (YLDNNSNGNS) the composition is skewed to polar residues. Residue Ser164 is modified to Phosphoserine.

As to quaternary structure, interacts with GDB1.

The protein localises to the cytoplasm. Functionally, acts as an inhibitor of GDB1, enhancing the ability of cells to store glucose as glycogen. The protein is Inhibitor of glycogen debranching 1 (IGD1) of Saccharomyces cerevisiae (strain ATCC 204508 / S288c) (Baker's yeast).